The following is a 1847-amino-acid chain: Replication factor C small subunit (1847 aa).

DOD-type homing endonuclease domains are found at residues tryptophan 179 to isoleucine 311, methionine 780 to isoleucine 927, and leucine 1348 to valine 1508.

This sequence belongs to the activator 1 small subunits family. RfcS subfamily. Heteromultimer composed of small subunits (RfcS) and large subunits (RfcL). In terms of processing, this protein undergoes a protein self splicing that involves a post-translational excision of the intervening region (intein) followed by peptide ligation.

Functionally, part of the RFC clamp loader complex which loads the PCNA sliding clamp onto DNA. This chain is Replication factor C small subunit (rfcS), found in Methanocaldococcus jannaschii (strain ATCC 43067 / DSM 2661 / JAL-1 / JCM 10045 / NBRC 100440) (Methanococcus jannaschii).